We begin with the raw amino-acid sequence, 130 residues long: Protein UL145 (130 aa).

Interacts with host DDB1; this interaction promotes STAT2 degradation.

In terms of biological role, plays a role in the inhibition of host innate immunity by exploiting host DDB1-cullin RING ubiquitin ligases (CRLs). Mechanistically, recruits host DDB1 via a DCAF-like interaction motif to antagonize IFN signaling by STAT2 degradation. The sequence is that of Protein UL145 (UL145) from Homo sapiens (Human).